Here is a 1473-residue protein sequence, read N- to C-terminus: G8 domain-containing protein DDB_G0286311 (1473 aa).

The N-terminal stretch at 1–21 (MKRFFIVILFILLVCIFNVKS) is a signal peptide. A helical transmembrane segment spans residues 105–125 (IVLMIATITGSLLFIRFNIGF). A glycan (N-linked (GlcNAc...) asparagine) is linked at asparagine 126. A helical membrane pass occupies residues 130–150 (TLIILIIGTIFLIGSSHSITL). N-linked (GlcNAc...) asparagine glycans are attached at residues asparagine 203, asparagine 241, and asparagine 275. Low complexity predominate over residues 298–375 (TGTTPTTTPT…PTTTPTTTPT (78 aa)). Positions 298–400 (TGTTPTTTPT…SSSPSSPSFS (103 aa)) are disordered. Residues 376 to 389 (DSCPTTSTWRPTMA) are compositionally biased toward polar residues. The segment covering 390–400 (SSSSPSSPSFS) has biased composition (low complexity). N-linked (GlcNAc...) asparagine glycosylation is found at asparagine 444, asparagine 637, asparagine 680, asparagine 1078, asparagine 1088, asparagine 1176, asparagine 1206, asparagine 1225, asparagine 1389, and asparagine 1424. The G8 domain maps to 626–754 (SIWSSGIVPL…YHNTWSKLST (129 aa)).

The protein belongs to the comF family.

Its subcellular location is the membrane. This is G8 domain-containing protein DDB_G0286311 from Dictyostelium discoideum (Social amoeba).